Consider the following 533-residue polypeptide: Calcium/calmodulin-dependent protein kinase type II subunit delta (533 aa).

The residue at position 2 (Ala2) is an N-acetylalanine. The Protein kinase domain occupies Tyr14–Ile272. ATP is bound by residues Leu20–Val28 and Lys43. Asp136 serves as the catalytic Proton acceptor. The interval His283–Lys292 is autoinhibitory domain. Residue Thr287 is modified to Phosphothreonine; by autocatalysis. Positions Leu291–Lys301 are calmodulin-binding. Phosphothreonine; by autocatalysis occurs at positions 306 and 307. Ser315 carries the phosphoserine modification. Lys318 carries the N6-acetyllysine modification. Residues Ser319 and Ser364 each carry the phosphoserine modification. The segment at Thr337–Glu375 is disordered. At Thr365 the chain carries Phosphothreonine. A Phosphoserine modification is found at Ser367. Thr370 and Thr371 each carry phosphothreonine. Residues Ser438, Ser524, and Ser528 each carry the phosphoserine modification.

The protein belongs to the protein kinase superfamily. CAMK Ser/Thr protein kinase family. CaMK subfamily. As to quaternary structure, CAMK2 is composed of 4 different chains: alpha (CAMK2A), beta (CAMK2B), gamma (CAMK2G), and delta (CAMK2D). The different isoforms assemble into homo- or heteromultimeric holoenzymes composed of 12 subunits with two hexameric rings stacked one on top of the other. Interacts with RRAD and CACNB2. Autophosphorylation of Thr-287 following activation by Ca(2+)/calmodulin. Phosphorylation of Thr-287 locks the kinase into an activated state. As to expression, expressed in liver.

Its subcellular location is the cell membrane. The protein localises to the sarcolemma. The protein resides in the sarcoplasmic reticulum membrane. It catalyses the reaction L-seryl-[protein] + ATP = O-phospho-L-seryl-[protein] + ADP + H(+). The catalysed reaction is L-threonyl-[protein] + ATP = O-phospho-L-threonyl-[protein] + ADP + H(+). With respect to regulation, activated by Ca(2+)/calmodulin. Binding of calmodulin results in conformational change that relieves intrasteric autoinhibition and allows autophosphorylation of Thr-287 which turns the kinase in a constitutively active form and confers to the kinase a Ca(2+)-independent activity. Its function is as follows. Calcium/calmodulin-dependent protein kinase involved in the regulation of Ca(2+) homeostatis and excitation-contraction coupling (ECC) in heart by targeting ion channels, transporters and accessory proteins involved in Ca(2+) influx into the myocyte, Ca(2+) release from the sarcoplasmic reticulum (SR), SR Ca(2+) uptake and Na(+) and K(+) channel transport. Targets also transcription factors and signaling molecules to regulate heart function. In its activated form, is involved in the pathogenesis of dilated cardiomyopathy and heart failure. Contributes to cardiac decompensation and heart failure by regulating SR Ca(2+) release via direct phosphorylation of RYR2 Ca(2+) channel on 'Ser-2808'. In the nucleus, phosphorylates the MEF2 repressor HDAC4, promoting its nuclear export and binding to 14-3-3 protein, and expression of MEF2 and genes involved in the hypertrophic program. Is essential for left ventricular remodeling responses to myocardial infarction. In pathological myocardial remodeling acts downstream of the beta adrenergic receptor signaling cascade to regulate key proteins involved in ECC. Regulates Ca(2+) influx to myocytes by binding and phosphorylating the L-type Ca(2+) channel subunit beta-2 CACNB2. In addition to Ca(2+) channels, can target and regulate the cardiac sarcolemmal Na(+) channel Nav1.5/SCN5A and the K+ channel Kv4.3/KCND3, which contribute to arrhythmogenesis in heart failure. Phosphorylates phospholamban (PLN/PLB), an endogenous inhibitor of SERCA2A/ATP2A2, contributing to the enhancement of SR Ca(2+) uptake that may be important in frequency-dependent acceleration of relaxation (FDAR) and maintenance of contractile function during acidosis. May participate in the modulation of skeletal muscle function in response to exercise, by regulating SR Ca(2+) transport through phosphorylation of PLN/PLB and triadin, a ryanodine receptor-coupling factor. In response to interferon-gamma (IFN-gamma) stimulation, catalyzes phosphorylation of STAT1, stimulating the JAK-STAT signaling pathway. In Oryctolagus cuniculus (Rabbit), this protein is Calcium/calmodulin-dependent protein kinase type II subunit delta (CAMK2D).